A 575-amino-acid chain; its full sequence is MKLTDVDFAVEASGMVRAFNQAGVLDVSDVHVAQRLCALAGESDERVALAVAVAVRALRAGSVCVDLLSIARVAGHDDLPWPDPADWLAAVRASPLLADPPVLHLYDDRLLYLDRYWREEEQVCADLLALLTSRRPAGVPDLRRLFPTGFDEQRRAAEIALSQGVTVLTGGPGTGKTTTVARLLALVAEQAELAGEPRPRIALAAPTGKAAARLAEAVRREMAKLDATDRARLGDLHAVTLHRLLGAKPGARFRQDRQNRLPHNVIVVDETSMVSLTLMARLAEAVRPGARLILVGDADQLASVEAGAVLADLVDGFSVRDDALVAQLRTSHRFGKVIGTLAEAIRAGDGDAVLGLLRSGEERIEFVDDEDPAPRLRAVLVPHALRLREAALLGASDVALATLDEHRLLCAHRDGPTGVLHWNRRVQAWLAEETGQPPWTPWYAGRPLLVTANDYGLRVYNGDTGVVLAGPTGLRAVISGASGPLDVATGRLGDVETMHAMTIHKSQGSQVDEVTVLMPQEDSRLLTRELLYTAVTRAKRKVRVVGSEASVRAAIARRAVRASGLRMRLQSTGCG.

170–177 (GGPGTGKT) is an ATP binding site.

This sequence belongs to the RecD family. Heterotrimer of RecB, RecC and RecD. All subunits contribute to DNA-binding.

The enzyme catalyses Couples ATP hydrolysis with the unwinding of duplex DNA at the replication fork by translocating in the 5'-3' direction. This creates two antiparallel DNA single strands (ssDNA). The leading ssDNA polymer is the template for DNA polymerase III holoenzyme which synthesizes a continuous strand.. The catalysed reaction is ATP + H2O = ADP + phosphate + H(+). Functionally, a helicase/nuclease that prepares dsDNA breaks (DSB) for recombinational DNA repair. Binds to DSBs and unwinds DNA via a highly rapid and processive ATP-dependent bidirectional helicase activity. Holoenzyme degrades any linearized DNA that is unable to undergo homologous recombination. In the holoenzyme this subunit has ssDNA-dependent ATPase and 5'-3' helicase activity. When added to pre-assembled RecBC greatly stimulates nuclease activity and augments holoenzyme processivity. Unlike the case in E.coli, suppresses RecA-dependent homologous recombination, is instead required for single-strand annealing pathway repair of DSB. Its function is as follows. A helicase/nuclease that prepares dsDNA breaks (DSB) for recombinational DNA repair. Binds to DSBs and unwinds DNA via a highly rapid and processive ATP-dependent bidirectional helicase activity. Unwinds dsDNA until it encounters a Chi (crossover hotspot instigator) sequence from the 3' direction. Cuts ssDNA a few nucleotides 3' to the Chi site. The properties and activities of the enzyme are changed at Chi. The Chi-altered holoenzyme produces a long 3'-ssDNA overhang and facilitates RecA-binding to the ssDNA for homologous DNA recombination and repair. Holoenzyme degrades any linearized DNA that is unable to undergo homologous recombination. In the holoenzyme this subunit has ssDNA-dependent ATPase and 5'-3' helicase activity. When added to pre-assembled RecBC greatly stimulates nuclease activity and augments holoenzyme processivity. Negatively regulates the RecA-loading ability of RecBCD. The chain is RecBCD enzyme subunit RecD from Mycobacterium tuberculosis (strain CDC 1551 / Oshkosh).